The sequence spans 342 residues: Methionyl-tRNA formyltransferase (342 aa).

119–122 (SILP) contributes to the (6S)-5,6,7,8-tetrahydrofolate binding site.

Belongs to the Fmt family.

It catalyses the reaction L-methionyl-tRNA(fMet) + (6R)-10-formyltetrahydrofolate = N-formyl-L-methionyl-tRNA(fMet) + (6S)-5,6,7,8-tetrahydrofolate + H(+). Attaches a formyl group to the free amino group of methionyl-tRNA(fMet). The formyl group appears to play a dual role in the initiator identity of N-formylmethionyl-tRNA by promoting its recognition by IF2 and preventing the misappropriation of this tRNA by the elongation apparatus. This Nostoc sp. (strain PCC 7120 / SAG 25.82 / UTEX 2576) protein is Methionyl-tRNA formyltransferase.